The primary structure comprises 332 residues: uncharacterized protein (332 aa).

Positions 1 to 23 (MKRIPSLIIGLLLILATWHSVLA) are cleaved as a signal peptide. Residues 231 to 251 (SFFLGMIVTLIILAPVILYLW) traverse the membrane as a helical segment.

The protein resides in the membrane. This is an uncharacterized protein from Pyrococcus horikoshii (strain ATCC 700860 / DSM 12428 / JCM 9974 / NBRC 100139 / OT-3).